The chain runs to 493 residues: UDP-N-acetylmuramoyl-L-alanyl-D-glutamate--2,6-diaminopimelate ligase (493 aa).

Thr32 lines the UDP-N-acetyl-alpha-D-muramoyl-L-alanyl-D-glutamate pocket. 110 to 116 (GTNGKTT) provides a ligand contact to ATP. Residues Asn151, 152–153 (TT), Ser179, and Arg187 each bind UDP-N-acetyl-alpha-D-muramoyl-L-alanyl-D-glutamate. Lys219 carries the post-translational modification N6-carboxylysine. Meso-2,6-diaminopimelate is bound by residues Arg386, 410-413 (DNPR), Gly460, and Glu464. A Meso-diaminopimelate recognition motif motif is present at residues 410-413 (DNPR).

It belongs to the MurCDEF family. MurE subfamily. Mg(2+) serves as cofactor. Carboxylation is probably crucial for Mg(2+) binding and, consequently, for the gamma-phosphate positioning of ATP.

It is found in the cytoplasm. The catalysed reaction is UDP-N-acetyl-alpha-D-muramoyl-L-alanyl-D-glutamate + meso-2,6-diaminopimelate + ATP = UDP-N-acetyl-alpha-D-muramoyl-L-alanyl-gamma-D-glutamyl-meso-2,6-diaminopimelate + ADP + phosphate + H(+). It functions in the pathway cell wall biogenesis; peptidoglycan biosynthesis. Its function is as follows. Catalyzes the addition of meso-diaminopimelic acid to the nucleotide precursor UDP-N-acetylmuramoyl-L-alanyl-D-glutamate (UMAG) in the biosynthesis of bacterial cell-wall peptidoglycan. The chain is UDP-N-acetylmuramoyl-L-alanyl-D-glutamate--2,6-diaminopimelate ligase from Lactiplantibacillus plantarum (strain ATCC BAA-793 / NCIMB 8826 / WCFS1) (Lactobacillus plantarum).